A 44-amino-acid chain; its full sequence is Small ribosomal subunit protein eS31 (44 aa).

Residues Cys-18, Cys-21, Cys-35, and Cys-38 each contribute to the Zn(2+) site. The C4-type zinc finger occupies 18 to 38 (CPRCGDTFLAAHDDRQVCGRC).

It belongs to the eukaryotic ribosomal protein eS31 family. In terms of assembly, part of the 30S ribosomal subunit. Zn(2+) serves as cofactor.

This Halobacterium salinarum (strain ATCC 29341 / DSM 671 / R1) protein is Small ribosomal subunit protein eS31.